The sequence spans 326 residues: Type II secretion system protein K (326 aa).

The propeptide at 1-7 (MNHRQRG) is leader sequence. A helical membrane pass occupies residues 8–28 (IALLMVLLILALMMVLASAMT). Residues 29-326 (ERSARMYQQT…RYGIYWVADE (298 aa)) are Periplasmic-facing.

It belongs to the GSP K family. In terms of assembly, type II secretion is composed of four main components: the outer membrane complex, the inner membrane complex, the cytoplasmic secretion ATPase and the periplasm-spanning pseudopilus. Interacts with core component PulG. Cleaved by prepilin peptidase.

Its subcellular location is the cell inner membrane. In terms of biological role, component of the type II secretion system required for the energy-dependent secretion of extracellular factors such as proteases and toxins from the periplasm. Plays a role in pseudopilus assembly and seems to control its length. Interacts with the pseudopilus tip complex that is critical for the recognition and binding of secretion substrates. This Klebsiella pneumoniae protein is Type II secretion system protein K (pulK).